A 433-amino-acid polypeptide reads, in one-letter code: Signal recognition particle 54 kDa protein (433 aa).

Residues 106–113 (GVEGSGKT), 186–190 (DTAGR), and 244–247 (TKMD) each bind GTP.

This sequence belongs to the GTP-binding SRP family. SRP54 subfamily. Part of the signal recognition particle protein translocation system, which is composed of SRP and FtsY. Archaeal SRP consists of a 7S RNA molecule of 300 nucleotides and two protein subunits: SRP54 and SRP19.

It is found in the cytoplasm. It carries out the reaction GTP + H2O = GDP + phosphate + H(+). Functionally, involved in targeting and insertion of nascent membrane proteins into the cytoplasmic membrane. Binds to the hydrophobic signal sequence of the ribosome-nascent chain (RNC) as it emerges from the ribosomes. The SRP-RNC complex is then targeted to the cytoplasmic membrane where it interacts with the SRP receptor FtsY. The sequence is that of Signal recognition particle 54 kDa protein from Pyrobaculum arsenaticum (strain DSM 13514 / JCM 11321 / PZ6).